We begin with the raw amino-acid sequence, 178 residues long: Female-specific protein transformer (178 aa).

Composition is skewed to basic and acidic residues over residues 1 to 18 (MKMDADSSCGADHRDSHG) and 25 to 40 (REREQHGRTSNRDSKK). The disordered stretch occupies residues 1–117 (MKMDADSSCG…RRYNPPPKII (117 aa)). Basic residues-rich tracts occupy residues 59–73 (RRLRKRSPRSTRRSA) and 81–108 (RRHRHRSRSRNRSRSRSSERRRRQRSPR).

The protein localises to the nucleus speckle. Functionally, member of the regulatory pathway controlling female somatic sexual differentiation, regulated by Sxl. Activates dsx female-specific splicing by promoting the formation of a splicing enhancer complex which consists of tra, tra2 and sr proteins. The chain is Female-specific protein transformer (tra) from Drosophila erecta (Fruit fly).